A 175-amino-acid polypeptide reads, in one-letter code: Transcription factor HES-3 (175 aa).

The bHLH domain maps to 1 to 49 (MEKKRRARINVSLEQLRSLLERHYSHQIRKRKLEKADILELSVKYMRSL). Residues 65–98 (YPSGFQGGLRGVSQRLRPGEGDSGLRCPLLLQRR) enclose the Orange domain. A disordered region spans residues 126–166 (RAAGGSHSPQSPLPLPGGLLESSTDVVAPHPASNCQAESTR). Residues 129–148 (GGSHSPQSPLPLPGGLLESS) are compositionally biased toward low complexity. The short motif at 172–175 (WRPW) is the WRPW motif element.

Transcription repression requires formation of a complex with a corepressor protein of the Groucho/TLE family.

The protein resides in the nucleus. In terms of biological role, transcriptional repressor of genes that require a bHLH protein for their transcription. This Mus musculus (Mouse) protein is Transcription factor HES-3 (Hes3).